Consider the following 336-residue polypeptide: UDP-3-O-acylglucosamine N-acyltransferase (336 aa).

His236 (proton acceptor) is an active-site residue.

Belongs to the transferase hexapeptide repeat family. LpxD subfamily. Homotrimer.

It carries out the reaction a UDP-3-O-[(3R)-3-hydroxyacyl]-alpha-D-glucosamine + a (3R)-hydroxyacyl-[ACP] = a UDP-2-N,3-O-bis[(3R)-3-hydroxyacyl]-alpha-D-glucosamine + holo-[ACP] + H(+). It participates in bacterial outer membrane biogenesis; LPS lipid A biosynthesis. In terms of biological role, catalyzes the N-acylation of UDP-3-O-acylglucosamine using 3-hydroxyacyl-ACP as the acyl donor. Is involved in the biosynthesis of lipid A, a phosphorylated glycolipid that anchors the lipopolysaccharide to the outer membrane of the cell. The polypeptide is UDP-3-O-acylglucosamine N-acyltransferase (Aromatoleum aromaticum (strain DSM 19018 / LMG 30748 / EbN1) (Azoarcus sp. (strain EbN1))).